Reading from the N-terminus, the 255-residue chain is 4-hydroxy-tetrahydrodipicolinate reductase (255 aa).

Residues 8 to 13 (GASGRM), 89 to 91 (GTT), and 114 to 117 (SSNY) contribute to the NAD(+) site. H146 serves as the catalytic Proton donor/acceptor. H147 is a (S)-2,3,4,5-tetrahydrodipicolinate binding site. Catalysis depends on K150, which acts as the Proton donor. 156 to 157 (GT) contacts (S)-2,3,4,5-tetrahydrodipicolinate.

Belongs to the DapB family.

It is found in the cytoplasm. It carries out the reaction (S)-2,3,4,5-tetrahydrodipicolinate + NAD(+) + H2O = (2S,4S)-4-hydroxy-2,3,4,5-tetrahydrodipicolinate + NADH + H(+). The enzyme catalyses (S)-2,3,4,5-tetrahydrodipicolinate + NADP(+) + H2O = (2S,4S)-4-hydroxy-2,3,4,5-tetrahydrodipicolinate + NADPH + H(+). The protein operates within amino-acid biosynthesis; L-lysine biosynthesis via DAP pathway; (S)-tetrahydrodipicolinate from L-aspartate: step 4/4. Catalyzes the conversion of 4-hydroxy-tetrahydrodipicolinate (HTPA) to tetrahydrodipicolinate. This is 4-hydroxy-tetrahydrodipicolinate reductase from Methanoregula boonei (strain DSM 21154 / JCM 14090 / 6A8).